We begin with the raw amino-acid sequence, 208 residues long: Myosin light chain 6B (208 aa).

The segment at 1–51 is disordered; the sequence is MPPKKDVPVKKPAGPSISKPAAKPAAAGAPPAKTKAEPAVPQAPQKTQEPP. Over residues 10–40 the composition is skewed to low complexity; it reads KKPAGPSISKPAAKPAAAGAPPAKTKAEPAV. EF-hand domains lie at 64-99, 141-176, and 176-208; these read DQLE…LGQN, GTYE…LGEK, and KMTE…ILSV.

In terms of assembly, myosin is a hexamer of 2 heavy chains and 4 light chains.

Its function is as follows. Regulatory light chain of myosin. Does not bind calcium. The protein is Myosin light chain 6B (MYL6B) of Homo sapiens (Human).